A 297-amino-acid chain; its full sequence is Phosphoribosylaminoimidazole-succinocarboxamide synthase (297 aa).

The protein belongs to the SAICAR synthetase family.

The enzyme catalyses 5-amino-1-(5-phospho-D-ribosyl)imidazole-4-carboxylate + L-aspartate + ATP = (2S)-2-[5-amino-1-(5-phospho-beta-D-ribosyl)imidazole-4-carboxamido]succinate + ADP + phosphate + 2 H(+). It participates in purine metabolism; IMP biosynthesis via de novo pathway; 5-amino-1-(5-phospho-D-ribosyl)imidazole-4-carboxamide from 5-amino-1-(5-phospho-D-ribosyl)imidazole-4-carboxylate: step 1/2. The polypeptide is Phosphoribosylaminoimidazole-succinocarboxamide synthase (Mycobacterium sp. (strain JLS)).